We begin with the raw amino-acid sequence, 273 residues long: Nitrogenase iron protein (273 aa).

8–15 is an ATP binding site; that stretch reads GKGGIGKS. Position 95 (C95) interacts with [4Fe-4S] cluster. At R98 the chain carries ADP-ribosylarginine; by dinitrogenase reductase ADP-ribosyltransferase. C130 contacts [4Fe-4S] cluster.

Belongs to the NifH/BchL/ChlL family. In terms of assembly, homodimer. [4Fe-4S] cluster is required as a cofactor. The reversible ADP-ribosylation of Arg-98 inactivates the nitrogenase reductase and regulates nitrogenase activity.

It carries out the reaction N2 + 8 reduced [2Fe-2S]-[ferredoxin] + 16 ATP + 16 H2O = H2 + 8 oxidized [2Fe-2S]-[ferredoxin] + 2 NH4(+) + 16 ADP + 16 phosphate + 6 H(+). The key enzymatic reactions in nitrogen fixation are catalyzed by the nitrogenase complex, which has 2 components: the iron protein and the molybdenum-iron protein. This is Nitrogenase iron protein from Roseiflexus sp. (strain RS-1).